The sequence spans 186 residues: ATP synthase subunit b (186 aa).

The chain crosses the membrane as a helical span at residues 28 to 48 (IVWSIIPFAVILFVFAKVVLP).

This sequence belongs to the ATPase B chain family. In terms of assembly, F-type ATPases have 2 components, F(1) - the catalytic core - and F(0) - the membrane proton channel. F(1) has five subunits: alpha(3), beta(3), gamma(1), delta(1), epsilon(1). F(0) has three main subunits: a(1), b(2) and c(10-14). The alpha and beta chains form an alternating ring which encloses part of the gamma chain. F(1) is attached to F(0) by a central stalk formed by the gamma and epsilon chains, while a peripheral stalk is formed by the delta and b chains.

The protein resides in the cell membrane. F(1)F(0) ATP synthase produces ATP from ADP in the presence of a proton or sodium gradient. F-type ATPases consist of two structural domains, F(1) containing the extramembraneous catalytic core and F(0) containing the membrane proton channel, linked together by a central stalk and a peripheral stalk. During catalysis, ATP synthesis in the catalytic domain of F(1) is coupled via a rotary mechanism of the central stalk subunits to proton translocation. In terms of biological role, component of the F(0) channel, it forms part of the peripheral stalk, linking F(1) to F(0). This chain is ATP synthase subunit b, found in Corynebacterium urealyticum (strain ATCC 43042 / DSM 7109).